The sequence spans 581 residues: Tricyclene synthase Oc15, chloroplastic (581 aa).

A chloroplast-targeting transit peptide spans 1 to 68; it reads MAFCISYVGA…ALCLNEHSLS (68 aa). Asn27, Asn206, and Asn319 each carry an N-linked (GlcNAc...) asparagine glycan. Mg(2+) contacts are provided by Asp338 and Asp342. Residues 338 to 342 carry the DDXXD motif motif; it reads DDIFD. N-linked (GlcNAc...) asparagine glycans are attached at residues Asn384 and Asn465. Mg(2+) contacts are provided by Asn482, Ser486, and Glu490. Residue Asn509 is glycosylated (N-linked (GlcNAc...) asparagine).

It belongs to the terpene synthase family. Tpsg subfamily. The cofactor is Mg(2+). Mn(2+) serves as cofactor. In terms of tissue distribution, accumulates in flowers; mostly expressed in both upper and lower petal lobes, and, to a lower extent, in tube and stamens.

Its subcellular location is the plastid. The protein resides in the chloroplast stroma. It carries out the reaction (2E)-geranyl diphosphate = tricyclene + diphosphate. It catalyses the reaction (2E)-geranyl diphosphate = beta-myrcene + diphosphate. It functions in the pathway secondary metabolite biosynthesis; terpenoid biosynthesis. In terms of biological role, contributes to floral scent emission. This is Tricyclene synthase Oc15, chloroplastic (Oc15) from Antirrhinum majus (Garden snapdragon).